The chain runs to 414 residues: 5-aminolevulinate synthase (414 aa).

Substrate contacts are provided by arginine 22, serine 133, and lysine 152. 3 residues coordinate pyridoxal 5'-phosphate: serine 185, histidine 213, and threonine 241. The active site involves lysine 244. N6-(pyridoxal phosphate)lysine is present on lysine 244. Pyridoxal 5'-phosphate is bound by residues threonine 273 and threonine 274. Threonine 359 serves as a coordination point for substrate.

Belongs to the class-II pyridoxal-phosphate-dependent aminotransferase family. In terms of assembly, homodimer. Requires pyridoxal 5'-phosphate as cofactor.

The catalysed reaction is succinyl-CoA + glycine + H(+) = 5-aminolevulinate + CO2 + CoA. Its pathway is porphyrin-containing compound metabolism; protoporphyrin-IX biosynthesis; 5-aminolevulinate from glycine: step 1/1. The polypeptide is 5-aminolevulinate synthase (hemA) (Rickettsia typhi (strain ATCC VR-144 / Wilmington)).